The primary structure comprises 113 residues: U11-theraphotoxin-Hhn1a (113 aa).

An N-terminal signal peptide occupies residues 1–21 (MNTVRVTFLPVFVLAVSLGQA). A propeptide spanning residues 22 to 74 (DKDENRMEMQEKTEQGKSYLDFAENLLLQKLEELEAKLLEEDSEESRNSRQKR) is cleaved from the precursor. Positions 61–83 (EEDSEESRNSRQKRCIGEGVPCD) are disordered. Intrachain disulfides connect cysteine 75–cysteine 90, cysteine 82–cysteine 95, and cysteine 89–cysteine 110.

This sequence belongs to the neurotoxin 14 (magi-1) family. 01 (HNTX-16) subfamily. Expressed by the venom gland.

The protein localises to the secreted. The protein is U11-theraphotoxin-Hhn1a of Cyriopagopus hainanus (Chinese bird spider).